Here is a 329-residue protein sequence, read N- to C-terminus: Aspartate carbamoyltransferase catalytic subunit (329 aa).

Carbamoyl phosphate-binding residues include arginine 66 and threonine 67. Lysine 94 provides a ligand contact to L-aspartate. Carbamoyl phosphate contacts are provided by arginine 116, histidine 149, and glutamine 152. Residues arginine 189 and arginine 243 each contribute to the L-aspartate site. Carbamoyl phosphate is bound by residues glycine 284 and proline 285.

This sequence belongs to the aspartate/ornithine carbamoyltransferase superfamily. ATCase family. As to quaternary structure, heterododecamer (2C3:3R2) of six catalytic PyrB chains organized as two trimers (C3), and six regulatory PyrI chains organized as three dimers (R2).

It carries out the reaction carbamoyl phosphate + L-aspartate = N-carbamoyl-L-aspartate + phosphate + H(+). It participates in pyrimidine metabolism; UMP biosynthesis via de novo pathway; (S)-dihydroorotate from bicarbonate: step 2/3. In terms of biological role, catalyzes the condensation of carbamoyl phosphate and aspartate to form carbamoyl aspartate and inorganic phosphate, the committed step in the de novo pyrimidine nucleotide biosynthesis pathway. The sequence is that of Aspartate carbamoyltransferase catalytic subunit from Gloeobacter violaceus (strain ATCC 29082 / PCC 7421).